An 829-amino-acid chain; its full sequence is Potassium voltage-gated channel unc-103 (829 aa).

The tract at residues 1–76 (MKTAVFGRDS…PRASHSSRRT (76 aa)) is disordered. Topologically, residues 1-123 (MKTAVFGRDS…YSPFKAVWDW (123 aa)) are cytoplasmic. A compositionally biased stretch (gly residues) spans 46–66 (GVSGTGGGGSGGLQGAPGAGG). Residues 124-144 (IILLLVIYTAVFTPYVAAFLL) traverse the membrane as a helical segment. The Extracellular segment spans residues 145–158 (RELQDTAKKSRFTE). A helical membrane pass occupies residues 159–179 (PLEIVDLIVDIMFIVDIIINF). Residues 180–203 (RTTYVNENDEACQVVSDPGKIATH) lie on the Cytoplasmic side of the membrane. A helical transmembrane segment spans residues 204 to 224 (YFKGWFIIDMVAAVPFDLLLV). Residues 225–234 (STNSDETTTL) lie on the Extracellular side of the membrane. The chain crosses the membrane as a helical; Voltage-sensor span at residues 235–255 (IGLLKTARLLRLVRVARKLDR). Over 256–261 (YSEYGA) the chain is Cytoplasmic. Residues 262-282 (AVLLLLMATFALIAHWLACIW) form a helical membrane-spanning segment. Residues 283–327 (YAIGSAELSHKEYTWLHQLSKQLAQPYTSTNGTIPTGGPTLKSRY) are Extracellular-facing. Asn313 carries an N-linked (GlcNAc...) asparagine glycan. Residues 328-348 (VTSLYFTLSTITSIGFGNVSA) constitute an intramembrane region (pore-forming). The Extracellular portion of the chain corresponds to 349 to 354 (TTDSEK). Residues 355 to 375 (IFTIIMMILGSLMYASVFGNV) traverse the membrane as a helical segment. Residues 376 to 829 (SAIIQRLYSG…TPTQETDTIL (454 aa)) are Cytoplasmic-facing. A nucleoside 3',5'-cyclic phosphate is bound at residue 458 to 559 (AFAGSTPGCL…ILRDDLLDVL (102 aa)). Positions 601–674 (SMNKDRYTTP…PLLRRSTNHH (74 aa)) are disordered. The segment covering 603-615 (NKDRYTTPPDGDH) has biased composition (basic and acidic residues). Residues 640 to 650 (SAGSRSSSRCS) are compositionally biased toward low complexity.

Belongs to the potassium channel family. H (Eag) (TC 1.A.1.20) subfamily. Kv11.1/KCNH2 sub-subfamily. In terms of assembly, the potassium channel is composed of a homo- or heterotetrameric complex. Interacts with dnj-1; dnj-1 chaperone promotes tetramerization.

Its subcellular location is the cell membrane. In terms of biological role, pore-forming (alpha) subunit of voltage-gated inwardly rectifying potassium channel. Channel properties are modulated by cAMP and subunit assembly. Regulates the movements of the male's copulatory spicules before and during male mating behavior. This Caenorhabditis elegans protein is Potassium voltage-gated channel unc-103.